Consider the following 48-residue polypeptide: uncharacterized protein (48 aa).

The protein resides in the plastid. Its subcellular location is the cyanelle. This is an uncharacterized protein from Cyanophora paradoxa.